The following is a 401-amino-acid chain: Multidrug resistance protein MdtH (401 aa).

A run of 11 helical transmembrane segments spans residues 13–33 (YFLIIDNMFVVIGFYAVFPLI), 34–54 (SIHFVEQLGWTAFLVGFALGL), 88–108 (IGFIIMSLAHTPTLLCAACIL), 139–159 (ILMLEDSICAIIGITLGSWLL), 164–184 (FQLVCLTGAILFFIAGMFNAW), 211–231 (FIIYTLTLSGYYILSAQVMLM), 248–268 (YIYITEAILSLLLIIPITYWM), 275–295 (ETRLMLGLVIMIISLSPIGSV), 298–318 (LYELLILISLFYIGSIVAEPA), 341–361 (LSLALGGTLGYSGGGWLYDLG), and 366–386 (FYQLPWIALSIIGTITVLILY).

It belongs to the major facilitator superfamily. DHA1 family. MdtH (TC 2.A.1.2.21) subfamily.

The protein localises to the cell inner membrane. This Blochmanniella floridana protein is Multidrug resistance protein MdtH.